The primary structure comprises 476 residues: Aspartyl/glutamyl-tRNA(Asn/Gln) amidotransferase subunit B (476 aa).

It belongs to the GatB/GatE family. GatB subfamily. Heterotrimer of A, B and C subunits.

It catalyses the reaction L-glutamyl-tRNA(Gln) + L-glutamine + ATP + H2O = L-glutaminyl-tRNA(Gln) + L-glutamate + ADP + phosphate + H(+). The enzyme catalyses L-aspartyl-tRNA(Asn) + L-glutamine + ATP + H2O = L-asparaginyl-tRNA(Asn) + L-glutamate + ADP + phosphate + 2 H(+). In terms of biological role, allows the formation of correctly charged Asn-tRNA(Asn) or Gln-tRNA(Gln) through the transamidation of misacylated Asp-tRNA(Asn) or Glu-tRNA(Gln) in organisms which lack either or both of asparaginyl-tRNA or glutaminyl-tRNA synthetases. The reaction takes place in the presence of glutamine and ATP through an activated phospho-Asp-tRNA(Asn) or phospho-Glu-tRNA(Gln). The sequence is that of Aspartyl/glutamyl-tRNA(Asn/Gln) amidotransferase subunit B from Albidiferax ferrireducens (strain ATCC BAA-621 / DSM 15236 / T118) (Rhodoferax ferrireducens).